A 390-amino-acid polypeptide reads, in one-letter code: Probable tRNA pseudouridine synthase D 2 (390 aa).

Aspartate 93 acts as the Nucleophile in catalysis. The TRUD domain maps to 166 to 353; that stretch reads YVLNYYGIQR…YGTRRKMVTP (188 aa).

The protein belongs to the pseudouridine synthase TruD family.

It carries out the reaction uridine(13) in tRNA = pseudouridine(13) in tRNA. Its function is as follows. Could be responsible for synthesis of pseudouridine from uracil-13 in transfer RNAs. This Methanococcus maripaludis (strain DSM 14266 / JCM 13030 / NBRC 101832 / S2 / LL) protein is Probable tRNA pseudouridine synthase D 2.